The chain runs to 517 residues: 2-isopropylmalate synthase (517 aa).

The 262-residue stretch at 6-267 folds into the Pyruvate carboxyltransferase domain; sequence IIVFDTTLRD…YTTINTPEIY (262 aa). The Mn(2+) site is built by Asp15, His201, His203, and Asn237. A regulatory domain region spans residues 393 to 517; that stretch reads DLIGLQISDC…RLSKSSEHQV (125 aa).

It belongs to the alpha-IPM synthase/homocitrate synthase family. LeuA type 1 subfamily. Homodimer. The cofactor is Mn(2+).

The protein resides in the cytoplasm. The catalysed reaction is 3-methyl-2-oxobutanoate + acetyl-CoA + H2O = (2S)-2-isopropylmalate + CoA + H(+). The protein operates within amino-acid biosynthesis; L-leucine biosynthesis; L-leucine from 3-methyl-2-oxobutanoate: step 1/4. Functionally, catalyzes the condensation of the acetyl group of acetyl-CoA with 3-methyl-2-oxobutanoate (2-ketoisovalerate) to form 3-carboxy-3-hydroxy-4-methylpentanoate (2-isopropylmalate). This chain is 2-isopropylmalate synthase, found in Aliarcobacter butzleri (strain RM4018) (Arcobacter butzleri).